The chain runs to 620 residues: Glutathione-regulated potassium-efflux system protein KefC (620 aa).

The next 12 membrane-spanning stretches (helical) occupy residues 4-24 (HTLI…PIAV), 26-46 (LGLG…PWGL), 54-74 (SILH…GLEL), 90-110 (GALQ…LLGL), 114-134 (VAEL…MQAM), 149-169 (FAVL…IPLL), 178-198 (MGAF…VVLL), 218-238 (VFSA…EEVG), 270-290 (GLLL…GTLI), 294-314 (LRIV…LWLI), 327-347 (WFAV…GAAQ), and 359-379 (SLTL…VILN). Residues 399 to 518 (QPRVIIAGFG…AGVEKPERET (120 aa)) form the RCK N-terminal domain. The disordered stretch occupies residues 597–620 (GWQGTEEGKHTGNMADEPETKPSS).

This sequence belongs to the monovalent cation:proton antiporter 2 (CPA2) transporter (TC 2.A.37) family. KefC subfamily. Homodimer. Interacts with the regulatory subunit KefF.

The protein localises to the cell inner membrane. Pore-forming subunit of a potassium efflux system that confers protection against electrophiles. Catalyzes K(+)/H(+) antiport. This Escherichia coli (strain SMS-3-5 / SECEC) protein is Glutathione-regulated potassium-efflux system protein KefC.